The chain runs to 51 residues: Large ribosomal subunit protein eL39 (51 aa).

The disordered stretch occupies residues 32–51; it reads KRRVTRSPTRRHWRRVKLKA.

This sequence belongs to the eukaryotic ribosomal protein eL39 family.

This is Large ribosomal subunit protein eL39 from Pyrobaculum arsenaticum (strain DSM 13514 / JCM 11321 / PZ6).